Here is a 734-residue protein sequence, read N- to C-terminus: Threonine--tRNA ligase, cytoplasmic (734 aa).

Residues methionine 1–tyrosine 41 are disordered. Residues glutamine 11 to lysine 30 show a composition bias toward basic and acidic residues. One can recognise a TGS domain in the interval serine 69–leucine 135. Residues serine 195 and serine 289 each carry the phosphoserine modification. 2 positions are modified to phosphothreonine: threonine 297 and threonine 381. Residues serine 453 and serine 457 each carry the phosphoserine modification. Threonine 460 bears the Phosphothreonine mark. A Phosphoserine modification is found at serine 605.

The protein belongs to the class-II aminoacyl-tRNA synthetase family.

Its subcellular location is the cytoplasm. The catalysed reaction is tRNA(Thr) + L-threonine + ATP = L-threonyl-tRNA(Thr) + AMP + diphosphate + H(+). The polypeptide is Threonine--tRNA ligase, cytoplasmic (THS1) (Saccharomyces cerevisiae (strain ATCC 204508 / S288c) (Baker's yeast)).